A 1057-amino-acid polypeptide reads, in one-letter code: MPKRDDIQTILVVGSGPIIIGQAAEFDYAGTQACLALKEEGYRVILVNSNPATIMTDKEIADKVYIEPLTHDFIARIIRKEQPDALLPTLGGQTGLNMAIQLHDSGVLEANNVKLLGTELESIQQAEDREMFRTLMNDLNVPVPESDIVNTVEQAFEFKEQVGYPLIVRPAFTMGGTGGGICHNDAELKEVVSNGLHYSPATQCLIEKSIAGYKEIEYEVMRDKNDNAIVVCNMENIDPVGIHTGDSIVVAPSQTLSDVEYQMLRDVSLKVIRALGIEGGCNVQLALDPHSLNYYIIEVNPRVSRSSALASKATGYPIAKLAAKIAVGLTLDEMLNPITGTSYAAFEPTLDYVISKIPRFPFDKFEKGERELGTQMKATGEVMAIGRTYEESLLKAIRSLEYGVHHLGLPNGESYELDYIKERIGHQDDERLFFIGEAIRRGTSLEELHNMTKIDYFFLNKFQNIIDIEHELKNHQGDLEYLKYAKDYGFSDKVIAHRWDMEEKDIYELRMSQNIKPVYKMVDTCAAEFESTTPYYYGTYEDENESIVTDKEKILVLGSGPIRIGQGVEFDYATVHAVWAIQNAGYEAIIVNNNPETVSTDFSISDKLYFEPLTEEDVMNIINLEQPKGVVVQFGGQTAINLADKLAQHGVKILGTSLEDLNRAEDRKEFEALLREISVPQPQGKTATSPKEALKNAREIGYPVVVRPSYVLGGRAMEIVDNDQELENYMTQAVKASPEHPVLVDRYLTGKEIEVDAISDGETVVIPGIMEHIERAGVHSGDSIAVYPPQTLTQDEINTLEDYTIKLAKGLNIKGLINIQFVIAHDGVYVLEVNPRSSRTVPFLSKITDIQMAQLAMRAIMGETLAEMGYKQGIQPYSEGVYVKAPVFSFNKLKNVDITLGPEMKSTGEVMGKDLTLEKALYKGLTGSGFEVKDHGTVLMTVSDKDKDEIVKIAHRLNEIGYKILATRGTAQKLKDHNIPVEVVGKIGGEDDLLTRIQNGEVQIVINTMTKGKEIERDGFQIRRTTVENGVPCLTSLDTASALTNVIESMTFTMRNV.

Residues 1-401 form a carboxyphosphate synthetic domain region; that stretch reads MPKRDDIQTI…SLLKAIRSLE (401 aa). ATP-binding residues include R129, R169, G175, G176, K208, I210, E215, G241, I242, H243, Q284, and E298. Residues 133 to 327 form the ATP-grasp 1 domain; it reads RTLMNDLNVP…IAKLAAKIAV (195 aa). 3 residues coordinate Mg(2+): Q284, E298, and N300. Mn(2+) contacts are provided by Q284, E298, and N300. The interval 402 to 546 is oligomerization domain; it reads YGVHHLGLPN…YGTYEDENES (145 aa). Residues 547 to 929 are carbamoyl phosphate synthetic domain; sequence IVTDKEKILV…ALYKGLTGSG (383 aa). An ATP-grasp 2 domain is found at 671–861; it reads EALLREISVP…MAQLAMRAIM (191 aa). Residues R707, R746, L748, E752, G777, V778, H779, S780, Q820, and E832 each coordinate ATP. 3 residues coordinate Mg(2+): Q820, E832, and N834. Q820, E832, and N834 together coordinate Mn(2+). In terms of domain architecture, MGS-like spans 930–1057; it reads FEVKDHGTVL…ESMTFTMRNV (128 aa). Residues 930 to 1057 form an allosteric domain region; the sequence is FEVKDHGTVL…ESMTFTMRNV (128 aa).

The protein belongs to the CarB family. Composed of two chains; the small (or glutamine) chain promotes the hydrolysis of glutamine to ammonia, which is used by the large (or ammonia) chain to synthesize carbamoyl phosphate. Tetramer of heterodimers (alpha,beta)4. Requires Mg(2+) as cofactor. Mn(2+) serves as cofactor.

The enzyme catalyses hydrogencarbonate + L-glutamine + 2 ATP + H2O = carbamoyl phosphate + L-glutamate + 2 ADP + phosphate + 2 H(+). It carries out the reaction hydrogencarbonate + NH4(+) + 2 ATP = carbamoyl phosphate + 2 ADP + phosphate + 2 H(+). Its pathway is amino-acid biosynthesis; L-arginine biosynthesis; carbamoyl phosphate from bicarbonate: step 1/1. It participates in pyrimidine metabolism; UMP biosynthesis via de novo pathway; (S)-dihydroorotate from bicarbonate: step 1/3. Large subunit of the glutamine-dependent carbamoyl phosphate synthetase (CPSase). CPSase catalyzes the formation of carbamoyl phosphate from the ammonia moiety of glutamine, carbonate, and phosphate donated by ATP, constituting the first step of 2 biosynthetic pathways, one leading to arginine and/or urea and the other to pyrimidine nucleotides. The large subunit (synthetase) binds the substrates ammonia (free or transferred from glutamine from the small subunit), hydrogencarbonate and ATP and carries out an ATP-coupled ligase reaction, activating hydrogencarbonate by forming carboxy phosphate which reacts with ammonia to form carbamoyl phosphate. This chain is Carbamoyl phosphate synthase large chain, found in Staphylococcus epidermidis (strain ATCC 35984 / DSM 28319 / BCRC 17069 / CCUG 31568 / BM 3577 / RP62A).